The following is a 387-amino-acid chain: Involucrin (387 aa).

2 disordered regions span residues 1 to 319 (MSQQ…VHLG) and 347 to 387 (VCIP…LKQE). Polar residues predominate over residues 28–37 (NTQQDQMKQP). A compositionally biased stretch (low complexity) spans 62-71 (QVPEQECEPQ). 4 stretches are compositionally biased toward basic and acidic residues: residues 85-96 (KQQEPQEQEVHP), 104-115 (QEQEAHLGKKQE), 147-179 (QEVHLEKQLQEPQEVHLEKQLQEQEVHLEKQLQ), and 231-245 (QLEKQQEAQEQELHL).

It belongs to the involucrin family. As to quaternary structure, directly or indirectly cross-linked to cornifelin (CNFN). Substrate of transglutaminase. Specific glutamines or lysines are cross-linked to keratins, desmoplakin and to inter involucrin molecules. As to expression, keratinocytes of epidermis and other stratified squamous epithelia.

The protein resides in the cytoplasm. Part of the insoluble cornified cell envelope (CE) of stratified squamous epithelia. The protein is Involucrin (IVL) of Cephalopachus bancanus (Western tarsier).